Reading from the N-terminus, the 83-residue chain is High-potential iron-sulfur protein (83 aa).

4 residues coordinate [4Fe-4S] cluster: Cys43, Cys46, Cys61, and Cys75.

The protein belongs to the high-potential iron-sulfur protein (HiPIP) family. Homodimer.

Functionally, specific class of high-redox-potential 4Fe-4S ferredoxins. Functions in anaerobic electron transport in most purple and in some other photosynthetic bacteria and in at least one genus (Paracoccus) of halophilic, denitrifying bacteria. The protein is High-potential iron-sulfur protein (hip) of Thermochromatium tepidum (Chromatium tepidum).